We begin with the raw amino-acid sequence, 581 residues long: 4-hydroxy-3-methylbut-2-en-1-yl diphosphate synthase (flavodoxin) (581 aa).

4 residues coordinate [4Fe-4S] cluster: Cys489, Cys492, Cys523, and Glu530.

It belongs to the IspG family. [4Fe-4S] cluster serves as cofactor.

The enzyme catalyses (2E)-4-hydroxy-3-methylbut-2-enyl diphosphate + oxidized [flavodoxin] + H2O + 2 H(+) = 2-C-methyl-D-erythritol 2,4-cyclic diphosphate + reduced [flavodoxin]. It functions in the pathway isoprenoid biosynthesis; isopentenyl diphosphate biosynthesis via DXP pathway; isopentenyl diphosphate from 1-deoxy-D-xylulose 5-phosphate: step 5/6. Converts 2C-methyl-D-erythritol 2,4-cyclodiphosphate (ME-2,4cPP) into 1-hydroxy-2-methyl-2-(E)-butenyl 4-diphosphate. The sequence is that of 4-hydroxy-3-methylbut-2-en-1-yl diphosphate synthase (flavodoxin) from Porphyromonas gingivalis (strain ATCC BAA-308 / W83).